The chain runs to 398 residues: Putative F-box protein At3g17620 (398 aa).

One can recognise an F-box domain in the interval Met1–His45.

The protein is Putative F-box protein At3g17620 of Arabidopsis thaliana (Mouse-ear cress).